The sequence spans 689 residues: Glycine--tRNA ligase beta subunit (689 aa).

It belongs to the class-II aminoacyl-tRNA synthetase family. Tetramer of two alpha and two beta subunits.

The protein resides in the cytoplasm. It catalyses the reaction tRNA(Gly) + glycine + ATP = glycyl-tRNA(Gly) + AMP + diphosphate. The chain is Glycine--tRNA ligase beta subunit from Salmonella arizonae (strain ATCC BAA-731 / CDC346-86 / RSK2980).